Consider the following 204-residue polypeptide: Pantothenate transporter PanT (204 aa).

Helical transmembrane passes span 18–38, 39–59, 63–83, 86–106, 123–143, and 176–196; these read IILL…AVIV, GAQP…LGAR, FIGG…PGSI, LMFQ…LIIG, LGLG…VVLL, and IFEI…LVPI.

In E.coli forms a stable energy-coupling factor (ECF) transporter complex probably composed of a membrane-embedded substrate-binding protein (S component), two ATP-binding proteins (A components) and a transmembrane protein (T component).

The protein resides in the cell membrane. Functionally, probable pantothenate-binding protein that interacts with the energy-coupling factor (ECF) ABC-transporter complex. Unlike classic ABC transporters this ECF transporter provides the energy necessary to transport a number of different substrates. The substrates themselves are bound by transmembrane, not extracytoplasmic soluble proteins and transport it into cells. Upon coexpression with its energy-coupling factor (ECF) ABC-transporter complex EcfA1A2T in E.coli allows pantothenate uptake; uptake requires both PanT and EcfA1A2T. The chain is Pantothenate transporter PanT (panT) from Leuconostoc mesenteroides subsp. mesenteroides (strain ATCC 8293 / DSM 20343 / BCRC 11652 / CCM 1803 / JCM 6124 / NCDO 523 / NBRC 100496 / NCIMB 8023 / NCTC 12954 / NRRL B-1118 / 37Y).